The chain runs to 123 residues: Small ribosomal subunit protein uS12 (123 aa).

Asp-89 carries the post-translational modification 3-methylthioaspartic acid.

This sequence belongs to the universal ribosomal protein uS12 family. In terms of assembly, part of the 30S ribosomal subunit. Contacts proteins S8 and S17. May interact with IF1 in the 30S initiation complex.

With S4 and S5 plays an important role in translational accuracy. Functionally, interacts with and stabilizes bases of the 16S rRNA that are involved in tRNA selection in the A site and with the mRNA backbone. Located at the interface of the 30S and 50S subunits, it traverses the body of the 30S subunit contacting proteins on the other side and probably holding the rRNA structure together. The combined cluster of proteins S8, S12 and S17 appears to hold together the shoulder and platform of the 30S subunit. The chain is Small ribosomal subunit protein uS12 from Trichlorobacter lovleyi (strain ATCC BAA-1151 / DSM 17278 / SZ) (Geobacter lovleyi).